Consider the following 750-residue polypeptide: Photosystem I P700 chlorophyll a apoprotein A1 (750 aa).

8 consecutive transmembrane segments (helical) span residues 70–93 (VFSA…FHGA), 156–179 (LYCT…FHYH), 195–219 (LNHH…HVSL), 291–309 (IAHH…GHMY), 346–369 (WHAQ…HHMY), 385–411 (LSLF…IFMV), 433–455 (AIIS…LYIH), and 531–549 (FLVH…LILL). C573 and C582 together coordinate [4Fe-4S] cluster. Transmembrane regions (helical) follow at residues 589-610 (HVFL…HFSW) and 664-686 (LSAY…MFLF). H675 provides a ligand contact to chlorophyll a'. M683 and Y691 together coordinate chlorophyll a. Position 692 (W692) interacts with phylloquinone. Residues 724–744 (AVGVTHYLLGGIATTWAFFLA) traverse the membrane as a helical segment.

The protein belongs to the PsaA/PsaB family. As to quaternary structure, the PsaA/B heterodimer binds the P700 chlorophyll special pair and subsequent electron acceptors. PSI consists of a core antenna complex that captures photons, and an electron transfer chain that converts photonic excitation into a charge separation. The eukaryotic PSI reaction center is composed of at least 11 subunits. It depends on P700 is a chlorophyll a/chlorophyll a' dimer, A0 is one or more chlorophyll a, A1 is one or both phylloquinones and FX is a shared 4Fe-4S iron-sulfur center. as a cofactor.

It is found in the plastid. It localises to the chloroplast thylakoid membrane. It catalyses the reaction reduced [plastocyanin] + hnu + oxidized [2Fe-2S]-[ferredoxin] = oxidized [plastocyanin] + reduced [2Fe-2S]-[ferredoxin]. Its function is as follows. PsaA and PsaB bind P700, the primary electron donor of photosystem I (PSI), as well as the electron acceptors A0, A1 and FX. PSI is a plastocyanin-ferredoxin oxidoreductase, converting photonic excitation into a charge separation, which transfers an electron from the donor P700 chlorophyll pair to the spectroscopically characterized acceptors A0, A1, FX, FA and FB in turn. Oxidized P700 is reduced on the lumenal side of the thylakoid membrane by plastocyanin. The chain is Photosystem I P700 chlorophyll a apoprotein A1 from Aethionema grandiflorum (Persian stone-cress).